We begin with the raw amino-acid sequence, 253 residues long: MLIKDTIFYRPDWRWHIFLKYLTNNLSKYNCLEKIIPSEYSYKDSTYGSKKSKKNVNLCTWGVTHKKRIQFARAVCINSPKYSVLNFLIIPNTIYNVPFFGVDFVSLPNIYLLVLDFQPSLKIQNQYNNQLLEKLIKLKNHCHSSLPLAEEMSVDVARFFSPGAIWSKLPKEERSDFLIANQLYTSFKEYLDLYLEILFESKEVNIDLQKELINGQNNYLNYRRDNDPARPMLSSLFGKEFTESLIKEVLFTT.

This sequence belongs to the HY2 family.

The enzyme catalyses (3Z)-phycoerythrobilin + oxidized 2[4Fe-4S]-[ferredoxin] = 15,16-dihydrobiliverdin + reduced 2[4Fe-4S]-[ferredoxin] + 2 H(+). In terms of biological role, catalyzes the two-electron reduction of the C2 and C3(1) diene system of 15,16-dihydrobiliverdin. This is Phycoerythrobilin:ferredoxin oxidoreductase (pebB) from Prochlorococcus marinus (strain MIT 9215).